The sequence spans 370 residues: Propane 2-monooxygenase, reductase component (370 aa).

The segment covering 1-14 (MAPRPLRRHPPLHH) has biased composition (basic residues). The disordered stretch occupies residues 1-21 (MAPRPLRRHPPLHHSFHESRR). A 2Fe-2S ferredoxin-type domain is found at 28–118 (HRINFEPVDI…DCTIELLNFD (91 aa)). Positions 62, 67, 70, and 102 each coordinate [2Fe-2S] cluster. Positions 128–229 (IQDVRTRVTR…TGPYGSFTIK (102 aa)) constitute an FAD-binding FR-type domain.

Belongs to the TmoA/XamoA family. In terms of assembly, the propane 2-monooxygenase multicomponent enzyme system is composed of an electron transfer component and a monooxygenase component interacting with the effector protein PrmD. The electron transfer component is composed of a reductase (PrmB), and the monooxygenase component is formed by a large subunit (PrmA) and a small subunit (PrmC). The cofactor is FAD. Requires [2Fe-2S] cluster as cofactor.

Functionally, reductase component of the propane 2-monooxygenase multicomponent enzyme system which is involved in the degradation of propane via the O2-dependent hydroxylation of propane. Reductase catalyzes the transfer of electrons from NADH or NADPH to monooxygenase. This is Propane 2-monooxygenase, reductase component from Rhodococcus jostii (strain RHA1).